We begin with the raw amino-acid sequence, 876 residues long: Alanine--tRNA ligase (876 aa).

The Zn(2+) site is built by H564, H568, C666, and H670.

The protein belongs to the class-II aminoacyl-tRNA synthetase family. It depends on Zn(2+) as a cofactor.

Its subcellular location is the cytoplasm. It catalyses the reaction tRNA(Ala) + L-alanine + ATP = L-alanyl-tRNA(Ala) + AMP + diphosphate. Catalyzes the attachment of alanine to tRNA(Ala) in a two-step reaction: alanine is first activated by ATP to form Ala-AMP and then transferred to the acceptor end of tRNA(Ala). Also edits incorrectly charged Ser-tRNA(Ala) and Gly-tRNA(Ala) via its editing domain. This is Alanine--tRNA ligase from Porphyromonas gingivalis (strain ATCC BAA-308 / W83).